The following is a 225-amino-acid chain: 7-cyano-7-deazaguanine synthase (225 aa).

Residue 10 to 20 coordinates ATP; sequence VSGGLDSTTAL. The Zn(2+) site is built by Cys-189, Cys-199, Cys-202, and Cys-205.

It belongs to the QueC family. Zn(2+) serves as cofactor.

It carries out the reaction 7-carboxy-7-deazaguanine + NH4(+) + ATP = 7-cyano-7-deazaguanine + ADP + phosphate + H2O + H(+). It functions in the pathway purine metabolism; 7-cyano-7-deazaguanine biosynthesis. In terms of biological role, catalyzes the ATP-dependent conversion of 7-carboxy-7-deazaguanine (CDG) to 7-cyano-7-deazaguanine (preQ(0)). This chain is 7-cyano-7-deazaguanine synthase, found in Saccharophagus degradans (strain 2-40 / ATCC 43961 / DSM 17024).